We begin with the raw amino-acid sequence, 527 residues long: Chorismate synthase (527 aa).

Active-site residues include His-17, His-104, and Asp-485.

This sequence belongs to the chorismate synthase family.

The protein resides in the cytoplasm. It is found in the cytosol. The enzyme catalyses 5-O-(1-carboxyvinyl)-3-phosphoshikimate = chorismate + phosphate. The catalysed reaction is FMNH2 + NADP(+) = FMN + NADPH + 2 H(+). Its pathway is metabolic intermediate biosynthesis; chorismate biosynthesis; chorismate from D-erythrose 4-phosphate and phosphoenolpyruvate: step 7/7. Functionally, bifunctional chorismate synthase and flavin reductase. Catalyzes the conversion of 5-enolpyruvylshikimate 3-phosphate (EPSP) to form chorismate. Acts also as a flavin reductase (FR) able to generate reduced flavin mononucleotide in the presence of NADPH. The protein is Chorismate synthase of Plasmodium falciparum (isolate 3D7).